Here is a 517-residue protein sequence, read N- to C-terminus: MANDQNKDYDKIIVLDYGSQYNQLITRRIREFGIYSELKPHTITAAEVKKIAPKGIIFSGGPNSVYDEGALGVDEDIFKLGIPILGVCYGMQLMAQRLGGDVEPADNREYGKADIEVTDASAKLFHDLPKDQTVWMSHGDLVTRVPDGFRTTATSVNCPISAMDDDDRKFYGIQFHAEVQNTQYGHEILHHFAFDVCHAEANWSMDDFITKQIAKIRAEVGDKRVLLGLSGGVDSSVVGVLLHKAIGTQLTSIFVDHGLLRKGEAEQVMDSLKGKFGLNIIKVNAKDRFLNDLRGVTDPEKKRKIIGRDFIEVFNEEAAKLNGIEFLAQGTLYTDVVESGTDTAQTIKSHHNVGGLPEDLKFKLIEPLNKLFKDEVRELGEKLGMPHSLVWRQPFPGPGLGIRVIGEVTEDKLEIVRDSDYILREEIAKHGLDKDIWQYFTVLPGIRSVGVMGDGRTYDYTIGIRAITSIDGMTADFARIDWDVLQEISSRIVNEVKHVNRVVYDITSKPPATIEWE.

Residues lysine 11–asparagine 202 form the Glutamine amidotransferase type-1 domain. Residue cysteine 88 is the Nucleophile of the active site. Active-site residues include histidine 176 and glutamate 178. The region spanning tryptophan 203–arginine 392 is the GMPS ATP-PPase domain. Position 230–236 (serine 230–serine 236) interacts with ATP.

As to quaternary structure, homodimer.

It catalyses the reaction XMP + L-glutamine + ATP + H2O = GMP + L-glutamate + AMP + diphosphate + 2 H(+). It participates in purine metabolism; GMP biosynthesis; GMP from XMP (L-Gln route): step 1/1. Functionally, catalyzes the synthesis of GMP from XMP. The chain is GMP synthase [glutamine-hydrolyzing] (guaA) from Lacticaseibacillus rhamnosus (Lactobacillus rhamnosus).